Reading from the N-terminus, the 545-residue chain is Threonine--tRNA ligase catalytic subunit (545 aa).

The interval 139-433 is catalytic; that stretch reads DHRLIGEKLD…LLEHFKGKLP (295 aa). Residues Cys231, His282, and His410 each contribute to the Zn(2+) site.

Belongs to the class-II aminoacyl-tRNA synthetase family. As to quaternary structure, homodimer. Probably interacts with its editing subunit. The cofactor is Zn(2+).

Its subcellular location is the cytoplasm. The enzyme catalyses tRNA(Thr) + L-threonine + ATP = L-threonyl-tRNA(Thr) + AMP + diphosphate + H(+). Functionally, catalyzes the attachment of threonine to tRNA(Thr) in a two-step reaction: L-threonine is first activated by ATP to form Thr-AMP and then transferred to the acceptor end of tRNA(Thr). Also activates L-serine and transfers it to tRNA(Thr) but cannot deacylate incorrectly charged amino acid; unlike most archaea the editing function is found in a freestanding protein. This is Threonine--tRNA ligase catalytic subunit from Saccharolobus islandicus (strain M.16.4 / Kamchatka #3) (Sulfolobus islandicus).